The following is a 61-amino-acid chain: UPF0434 protein Bfl377 (61 aa).

This sequence belongs to the UPF0434 family.

The chain is UPF0434 protein Bfl377 from Blochmanniella floridana.